Reading from the N-terminus, the 260-residue chain is MIIVLSPAKSLDYDTPAHVPSYTLPAFVDDASELIHGLRKLSPQDIATLMDISDPLARLNFQRYADWSPTFTPANAKQAVLAFNGDVYEGFDAKSLSSTDLDYAQQHVRVLSGLYGLLRPLDLLQPYRLEMGTRFANARGKDLYAFWGDRITRALNEQLETRSGAARVLVNCASTEYFKSVKPKLLAAPVITPVFEDWKGGRYKIISFHAKRARGLMARFVVENRITDPKALKAFATEGYAFDAAASNDSTYVYRRRIGE.

Belongs to the UPF0246 family.

This is UPF0246 protein BceJ2315_22780 from Burkholderia cenocepacia (strain ATCC BAA-245 / DSM 16553 / LMG 16656 / NCTC 13227 / J2315 / CF5610) (Burkholderia cepacia (strain J2315)).